The following is a 65-amino-acid chain: DNA-directed RNA polymerase subunit Rpo10 (65 aa).

Zn(2+) contacts are provided by Cys7, Cys10, Cys44, and Cys45.

It belongs to the archaeal Rpo10/eukaryotic RPB10 RNA polymerase subunit family. As to quaternary structure, part of the RNA polymerase complex. Zn(2+) is required as a cofactor.

The protein resides in the cytoplasm. It carries out the reaction RNA(n) + a ribonucleoside 5'-triphosphate = RNA(n+1) + diphosphate. DNA-dependent RNA polymerase (RNAP) catalyzes the transcription of DNA into RNA using the four ribonucleoside triphosphates as substrates. The polypeptide is DNA-directed RNA polymerase subunit Rpo10 (Pyrobaculum arsenaticum (strain DSM 13514 / JCM 11321 / PZ6)).